We begin with the raw amino-acid sequence, 98 residues long: NADH-ubiquinone oxidoreductase chain 4L (98 aa).

Helical transmembrane passes span 2–22 (PSISTNITLAFTIALTGMLVF), 29–49 (SLLCLEGMMLAMFILSILFIM), and 61–81 (ILLLVLAACEAAIGLALLVMV).

The protein belongs to the complex I subunit 4L family. As to quaternary structure, core subunit of respiratory chain NADH dehydrogenase (Complex I) which is composed of 45 different subunits.

It localises to the mitochondrion inner membrane. The catalysed reaction is a ubiquinone + NADH + 5 H(+)(in) = a ubiquinol + NAD(+) + 4 H(+)(out). Functionally, core subunit of the mitochondrial membrane respiratory chain NADH dehydrogenase (Complex I) which catalyzes electron transfer from NADH through the respiratory chain, using ubiquinone as an electron acceptor. Part of the enzyme membrane arm which is embedded in the lipid bilayer and involved in proton translocation. This is NADH-ubiquinone oxidoreductase chain 4L (MT-ND4L) from Lepilemur sahamalazensis (Sahamalaza sportive lemur).